The sequence spans 284 residues: Avenin-like b10 (284 aa).

An N-terminal signal peptide occupies residues 1-18 (MKVFILALLALAATTAIA).

Belongs to the prolamin family. Contains disulfide bonds.

Functionally, seed storage protein. Might be integrated via inter-chain disulfide bonds within the glutenin polymer. The polypeptide is Avenin-like b10 (Triticum aestivum (Wheat)).